Here is a 344-residue protein sequence, read N- to C-terminus: Holliday junction branch migration complex subunit RuvB (344 aa).

The interval Met1 to Tyr185 is large ATPase domain (RuvB-L). Residues Leu24, Arg25, Gly66, Lys69, Thr70, Thr71, Glu132–Tyr134, Arg175, Tyr185, and Arg222 contribute to the ATP site. Position 70 (Thr70) interacts with Mg(2+). Residues Thr186–Asp256 are small ATPAse domain (RuvB-S). Residues Glu259 to Glu344 are head domain (RuvB-H). DNA is bound by residues Arg314 and Arg319.

The protein belongs to the RuvB family. In terms of assembly, homohexamer. Forms an RuvA(8)-RuvB(12)-Holliday junction (HJ) complex. HJ DNA is sandwiched between 2 RuvA tetramers; dsDNA enters through RuvA and exits via RuvB. An RuvB hexamer assembles on each DNA strand where it exits the tetramer. Each RuvB hexamer is contacted by two RuvA subunits (via domain III) on 2 adjacent RuvB subunits; this complex drives branch migration. In the full resolvosome a probable DNA-RuvA(4)-RuvB(12)-RuvC(2) complex forms which resolves the HJ.

Its subcellular location is the cytoplasm. It catalyses the reaction ATP + H2O = ADP + phosphate + H(+). Its function is as follows. The RuvA-RuvB-RuvC complex processes Holliday junction (HJ) DNA during genetic recombination and DNA repair, while the RuvA-RuvB complex plays an important role in the rescue of blocked DNA replication forks via replication fork reversal (RFR). RuvA specifically binds to HJ cruciform DNA, conferring on it an open structure. The RuvB hexamer acts as an ATP-dependent pump, pulling dsDNA into and through the RuvAB complex. RuvB forms 2 homohexamers on either side of HJ DNA bound by 1 or 2 RuvA tetramers; 4 subunits per hexamer contact DNA at a time. Coordinated motions by a converter formed by DNA-disengaged RuvB subunits stimulates ATP hydrolysis and nucleotide exchange. Immobilization of the converter enables RuvB to convert the ATP-contained energy into a lever motion, pulling 2 nucleotides of DNA out of the RuvA tetramer per ATP hydrolyzed, thus driving DNA branch migration. The RuvB motors rotate together with the DNA substrate, which together with the progressing nucleotide cycle form the mechanistic basis for DNA recombination by continuous HJ branch migration. Branch migration allows RuvC to scan DNA until it finds its consensus sequence, where it cleaves and resolves cruciform DNA. In Salinibacter ruber (strain DSM 13855 / M31), this protein is Holliday junction branch migration complex subunit RuvB.